Reading from the N-terminus, the 331-residue chain is Zinc finger CW-type PWWP domain protein 2 homolog (331 aa).

A CW-type zinc finger spans residues 9-64 (EFVHRTWVQCENESCLKWRLLSPAAAAAVNPSEPWYCFMNTDPSYSSCSVSEEDFP). The Zn(2+) site is built by C18, C23, C45, and C56. Positions 83-147 (LGSLVLVKLR…AAFVGHFSLT (65 aa)) constitute a PWWP domain. The interval 264–295 (IQEPTAREDESQGEQLSQCSPESPTGSPFQSY) is disordered. Residues 276–293 (GEQLSQCSPESPTGSPFQ) are compositionally biased toward polar residues.

Functionally, histone methylation reader which binds to non-methylated (H3K4me0), monomethylated (H3K4me1), dimethylated (H3K4me2) and trimethylated (H3K4me3) 'Lys-4' on histone H3. The order of binding preference is H3K4me3 &gt; H3K4me2 &gt; H3K4me1 &gt; H3K4me0. This chain is Zinc finger CW-type PWWP domain protein 2 homolog (Zcwpw2), found in Mus musculus (Mouse).